Here is a 379-residue protein sequence, read N- to C-terminus: MCVAMVIIHTKTLEKKAVDDVTSEASLQPQEPLTMSQGTALFSCGIMDSGRWADVGSVCGVQQRPVGSSLESLWDSMREAGATGGISGLLRDLSLSEASPASAAPPSKRQCRSLSCSDELGCRSSWRPQGSRVWTTVEKRRCHSGGSVQRGVFNPSGFPAMQRSSSFSLPAHSSHLEPFTHGFPFQAFSECPQTPQTLYRSHEQICPAEASSPESTPELQRRSGQSGLARSRSQPCVHNHQKIGVKRRRPADSHKQRPSLDLLKMTQKLQDFHSLSCPGFSGDDKTLPSSSPALLNDTCERAQNDSSADAPIHQSESSSEDALIHQSDSSSADALIHQSESSRPAGKERECLWAGLCSRRGRDLFQLGGELDIEQIERN.

2 disordered regions span residues 206–257 (CPAE…HKQR) and 302–348 (AQND…AGKE). The span at 212–236 (SPESTPELQRRSGQSGLARSRSQPC) shows a compositional bias: polar residues. Positions 239–249 (NHQKIGVKRRR) are enriched in basic residues. Residues 246-249 (KRRR) carry the Nuclear localization signal motif. Over residues 326–342 (QSDSSSADALIHQSESS) the composition is skewed to polar residues.

It belongs to the FAM53 family. In terms of assembly, interacts with ctnnb1. In terms of tissue distribution, mainly expressed in proliferating tissues.

It is found in the nucleus. Acts as a regulator of Wnt signaling pathway by regulating beta-catenin (ctnnb1) nuclear localization. Required for appendage regeneration by regulating cell proliferation. This is Protein FAM53B from Danio rerio (Zebrafish).